The chain runs to 207 residues: Non-structural protein 5 (207 aa).

A DRBM domain is found at 2–69 (DPVSVVHSFA…CVLISNDLKE (68 aa)).

This Banna virus (BAV) protein is Non-structural protein 5 (Segment-12).